A 333-amino-acid polypeptide reads, in one-letter code: UDP-N-acetylglucosamine 4,6-dehydratase (inverting) (333 aa).

Residues 19 to 22, 43 to 48, 67 to 68, Ala-87, Lys-91, and 129 to 130 each bind NADP(+); these read TGSF, SRDELK, DV, and LS. Lys-91 is a binding site for substrate. The active site involves Lys-133. NADP(+)-binding residues include Tyr-141 and Lys-145. Asn-173 provides a ligand contact to substrate. 174–178 contacts NADP(+); it reads VVGSR. The substrate site is built by Val-181, Thr-199, Arg-258, and Glu-261.

The protein belongs to the polysaccharide synthase family. Homohexamer. It depends on NADP(+) as a cofactor.

The enzyme catalyses UDP-N-acetyl-alpha-D-glucosamine = UDP-2-acetamido-2,6-dideoxy-beta-L-arabino-hex-4-ulose + H2O. In terms of biological role, catalyzes the first step in the biosynthesis of pseudaminic acid, a sialic-acid-like sugar that is used to modify flagellin. Has both C6 dehydratase and C5 epimerase activities that result in the production of both UDP-2-acetamido-2,6-dideoxy-beta-L-arabino-4-hexulose and UDP-2-acetamido-2,6-dideoxy-alpha-D-xylo-4-hexulose. The chain is UDP-N-acetylglucosamine 4,6-dehydratase (inverting) (pseB) from Helicobacter pylori (strain ATCC 700392 / 26695) (Campylobacter pylori).